The chain runs to 251 residues: Ubiquinone/menaquinone biosynthesis C-methyltransferase UbiE (251 aa).

S-adenosyl-L-methionine-binding positions include T74, D95, and 123-124; that span reads NA.

It belongs to the class I-like SAM-binding methyltransferase superfamily. MenG/UbiE family.

The catalysed reaction is a 2-demethylmenaquinol + S-adenosyl-L-methionine = a menaquinol + S-adenosyl-L-homocysteine + H(+). It catalyses the reaction a 2-methoxy-6-(all-trans-polyprenyl)benzene-1,4-diol + S-adenosyl-L-methionine = a 5-methoxy-2-methyl-3-(all-trans-polyprenyl)benzene-1,4-diol + S-adenosyl-L-homocysteine + H(+). It functions in the pathway quinol/quinone metabolism; menaquinone biosynthesis; menaquinol from 1,4-dihydroxy-2-naphthoate: step 2/2. It participates in cofactor biosynthesis; ubiquinone biosynthesis. Methyltransferase required for the conversion of demethylmenaquinol (DMKH2) to menaquinol (MKH2) and the conversion of 2-polyprenyl-6-methoxy-1,4-benzoquinol (DDMQH2) to 2-polyprenyl-3-methyl-6-methoxy-1,4-benzoquinol (DMQH2). This Shewanella pealeana (strain ATCC 700345 / ANG-SQ1) protein is Ubiquinone/menaquinone biosynthesis C-methyltransferase UbiE.